The chain runs to 424 residues: 3-phosphoshikimate 1-carboxyvinyltransferase (424 aa).

3-phosphoshikimate contacts are provided by K21, S22, and R26. K21 is a phosphoenolpyruvate binding site. G92 and R120 together coordinate phosphoenolpyruvate. The 3-phosphoshikimate site is built by S163, S164, Q165, S191, D306, and K333. Residue Q165 coordinates phosphoenolpyruvate. D306 acts as the Proton acceptor in catalysis. The phosphoenolpyruvate site is built by R337, R379, and K405.

It belongs to the EPSP synthase family. Monomer.

Its subcellular location is the cytoplasm. The catalysed reaction is 3-phosphoshikimate + phosphoenolpyruvate = 5-O-(1-carboxyvinyl)-3-phosphoshikimate + phosphate. Its pathway is metabolic intermediate biosynthesis; chorismate biosynthesis; chorismate from D-erythrose 4-phosphate and phosphoenolpyruvate: step 6/7. Its function is as follows. Catalyzes the transfer of the enolpyruvyl moiety of phosphoenolpyruvate (PEP) to the 5-hydroxyl of shikimate-3-phosphate (S3P) to produce enolpyruvyl shikimate-3-phosphate and inorganic phosphate. The protein is 3-phosphoshikimate 1-carboxyvinyltransferase of Clostridium perfringens (strain 13 / Type A).